We begin with the raw amino-acid sequence, 891 residues long: Aconitate hydratase A (891 aa).

3 residues coordinate [4Fe-4S] cluster: cysteine 435, cysteine 501, and cysteine 504.

The protein belongs to the aconitase/IPM isomerase family. Monomer. The cofactor is [4Fe-4S] cluster.

It carries out the reaction citrate = D-threo-isocitrate. It functions in the pathway carbohydrate metabolism; tricarboxylic acid cycle; isocitrate from oxaloacetate: step 2/2. Functionally, catalyzes the reversible isomerization of citrate to isocitrate via cis-aconitate. The apo form of AcnA functions as a RNA-binding regulatory protein which plays a role as a maintenance or survival enzyme during nutritional or oxidative stress. During oxidative stress inactive AcnA apo-enzyme without iron sulfur clusters binds the acnA mRNA 3' UTRs (untranslated regions), stabilizes acnA mRNA and increases AcnA synthesis, thus mediating a post-transcriptional positive autoregulatory switch. AcnA also enhances the stability of the sodA transcript. The polypeptide is Aconitate hydratase A (Escherichia coli (strain K12)).